Consider the following 344-residue polypeptide: Methionine import ATP-binding protein MetN (344 aa).

Residues 2–241 (IEIRNLSQRF…PHHEVTRALI (240 aa)) enclose the ABC transporter domain. 38–45 (GRSGAGKS) is a binding site for ATP.

The protein belongs to the ABC transporter superfamily. Methionine importer (TC 3.A.1.24) family. As to quaternary structure, the complex is composed of two ATP-binding proteins (MetN), two transmembrane proteins (MetI) and a solute-binding protein (MetQ).

It localises to the cell inner membrane. The catalysed reaction is L-methionine(out) + ATP + H2O = L-methionine(in) + ADP + phosphate + H(+). It carries out the reaction D-methionine(out) + ATP + H2O = D-methionine(in) + ADP + phosphate + H(+). Its function is as follows. Part of the ABC transporter complex MetNIQ involved in methionine import. Responsible for energy coupling to the transport system. The chain is Methionine import ATP-binding protein MetN from Burkholderia thailandensis (strain ATCC 700388 / DSM 13276 / CCUG 48851 / CIP 106301 / E264).